The primary structure comprises 96 residues: Phosphoribosyl-ATP pyrophosphatase (96 aa).

It belongs to the PRA-PH family.

Its subcellular location is the cytoplasm. It carries out the reaction 1-(5-phospho-beta-D-ribosyl)-ATP + H2O = 1-(5-phospho-beta-D-ribosyl)-5'-AMP + diphosphate + H(+). It participates in amino-acid biosynthesis; L-histidine biosynthesis; L-histidine from 5-phospho-alpha-D-ribose 1-diphosphate: step 2/9. This chain is Phosphoribosyl-ATP pyrophosphatase, found in Methanococcus maripaludis (strain C5 / ATCC BAA-1333).